Here is a 170-residue protein sequence, read N- to C-terminus: Sec-independent protein translocase protein TatB (170 aa).

A helical membrane pass occupies residues 1–21 (MIDLGISKLALIGAVALIVIG).

This sequence belongs to the TatB family. As to quaternary structure, the Tat system comprises two distinct complexes: a TatABC complex, containing multiple copies of TatA, TatB and TatC subunits, and a separate TatA complex, containing only TatA subunits. Substrates initially bind to the TatABC complex, which probably triggers association of the separate TatA complex to form the active translocon.

It localises to the cell inner membrane. Its function is as follows. Part of the twin-arginine translocation (Tat) system that transports large folded proteins containing a characteristic twin-arginine motif in their signal peptide across membranes. Together with TatC, TatB is part of a receptor directly interacting with Tat signal peptides. TatB may form an oligomeric binding site that transiently accommodates folded Tat precursor proteins before their translocation. This Cupriavidus necator (strain ATCC 17699 / DSM 428 / KCTC 22496 / NCIMB 10442 / H16 / Stanier 337) (Ralstonia eutropha) protein is Sec-independent protein translocase protein TatB.